Reading from the N-terminus, the 90-residue chain is UPF0298 protein RBAM_014860 (90 aa).

It belongs to the UPF0298 family.

It localises to the cytoplasm. This chain is UPF0298 protein RBAM_014860, found in Bacillus velezensis (strain DSM 23117 / BGSC 10A6 / LMG 26770 / FZB42) (Bacillus amyloliquefaciens subsp. plantarum).